Reading from the N-terminus, the 271-residue chain is D-methionine-binding lipoprotein MetQ (271 aa).

The N-terminal stretch at 1–22 is a signal peptide; sequence MAFKFKTFAAVGALIGSLALAG. Residue cysteine 23 is the site of N-palmitoyl cysteine attachment. The S-diacylglycerol cysteine moiety is linked to residue cysteine 23.

Belongs to the NlpA lipoprotein family.

Its subcellular location is the cell membrane. In terms of biological role, this protein is a component of a D-methionine permease, a binding protein-dependent, ATP-driven transport system. This Salmonella typhi protein is D-methionine-binding lipoprotein MetQ (metQ).